The primary structure comprises 706 residues: Septin ring organizing protein mid2 (706 aa).

Disordered regions lie at residues 62-102 (STAP…PFST) and 145-180 (DEAS…KKNP). Polar residues-rich tracts occupy residues 81–90 (YDQTLSNSSS) and 149–169 (NKSS…SNQG). Position 379 is a phosphoserine (Ser-379). A PH domain is found at 583–688 (TLLCDGYLCQ…WMSTLRQHLG (106 aa)).

It belongs to the BUD4 family.

Its subcellular location is the cytoplasm. The protein resides in the cell cortex. The protein localises to the cytoskeleton. Functionally, responsible for the proper stability and function of septins during cytokinesis. Required for the correct formation of the medial septin ring structure in mitosis and for the proper localization of endo-glucanases agn1 and eng1, which are needed for efficient cell separation. May act as a landmark for the localization of hydrolytic proteins to the medial region. The chain is Septin ring organizing protein mid2 (mid2) from Schizosaccharomyces pombe (strain 972 / ATCC 24843) (Fission yeast).